We begin with the raw amino-acid sequence, 334 residues long: Holliday junction branch migration complex subunit RuvB (334 aa).

The tract at residues 1 to 182 is large ATPase domain (RuvB-L); that stretch reads MDKRMVDQEF…FGVHLRLEYY (182 aa). ATP is bound by residues L21, R22, G63, K66, T67, T68, 129–131, R172, Y182, and R219; that span reads EDF. T67 contacts Mg(2+). A small ATPAse domain (RuvB-S) region spans residues 183–253; it reads NENDLKEIIT…TTKRALQLLQ (71 aa). Positions 256 to 334 are head domain (RuvB-H); it reads QHGLDYIDHK…HFNTTNEKRE (79 aa). Residues R292, R311, and R316 each contribute to the DNA site.

Belongs to the RuvB family. In terms of assembly, homohexamer. Forms an RuvA(8)-RuvB(12)-Holliday junction (HJ) complex. HJ DNA is sandwiched between 2 RuvA tetramers; dsDNA enters through RuvA and exits via RuvB. An RuvB hexamer assembles on each DNA strand where it exits the tetramer. Each RuvB hexamer is contacted by two RuvA subunits (via domain III) on 2 adjacent RuvB subunits; this complex drives branch migration. In the full resolvosome a probable DNA-RuvA(4)-RuvB(12)-RuvC(2) complex forms which resolves the HJ.

It is found in the cytoplasm. The catalysed reaction is ATP + H2O = ADP + phosphate + H(+). Its function is as follows. The RuvA-RuvB-RuvC complex processes Holliday junction (HJ) DNA during genetic recombination and DNA repair, while the RuvA-RuvB complex plays an important role in the rescue of blocked DNA replication forks via replication fork reversal (RFR). RuvA specifically binds to HJ cruciform DNA, conferring on it an open structure. The RuvB hexamer acts as an ATP-dependent pump, pulling dsDNA into and through the RuvAB complex. RuvB forms 2 homohexamers on either side of HJ DNA bound by 1 or 2 RuvA tetramers; 4 subunits per hexamer contact DNA at a time. Coordinated motions by a converter formed by DNA-disengaged RuvB subunits stimulates ATP hydrolysis and nucleotide exchange. Immobilization of the converter enables RuvB to convert the ATP-contained energy into a lever motion, pulling 2 nucleotides of DNA out of the RuvA tetramer per ATP hydrolyzed, thus driving DNA branch migration. The RuvB motors rotate together with the DNA substrate, which together with the progressing nucleotide cycle form the mechanistic basis for DNA recombination by continuous HJ branch migration. Branch migration allows RuvC to scan DNA until it finds its consensus sequence, where it cleaves and resolves cruciform DNA. This chain is Holliday junction branch migration complex subunit RuvB, found in Staphylococcus epidermidis (strain ATCC 35984 / DSM 28319 / BCRC 17069 / CCUG 31568 / BM 3577 / RP62A).